The sequence spans 311 residues: Phospholipid phosphatase 3 (311 aa).

Residues 1-33 are Cytoplasmic-facing; that stretch reads MQNYKYDKAIVAESKNGGSPALNNNPRKGGSKR. Ser-19 is subject to Phosphoserine. A helical membrane pass occupies residues 34 to 54; it reads VLLICLDLFCLFMAGLPFIII. Over 55-85 the chain is Extracellular; sequence ETSTIKPYHRGFYCNDESIKYPQKTGETIND. A helical transmembrane segment spans residues 86-106; the sequence is AVLTAVGIVIAILAIITGEFY. Residues 107-123 lie on the Cytoplasmic side of the membrane; it reads RIYYLKEKSRSTIQNPY. Positions 109–110 match the Dityrosine basolateral targeting motif motif; the sequence is YY. A helical membrane pass occupies residues 124-144; it reads VAALYKQVGCFLFGCAISQSF. Topologically, residues 145–194 are extracellular; sequence TDIAKVSIGRLRPHFLNVCNPDFSQINCSVGYIQNYRCRGEDSKVQEARK. The segment at 149–157 is phosphatase sequence motif I; the sequence is KVSIGRLRP. N-linked (GlcNAc...) asparagine glycosylation is present at Asn-171. The Integrin-binding motif motif lies at 183-185; sequence RGE. A helical membrane pass occupies residues 195-215; sequence SFFSGHASFSMYTMLYLVLYL. Residues 197–200 form a phosphatase sequence motif II region; the sequence is FSGH. The Proton donors role is filled by His-200. Over 216–226 the chain is Cytoplasmic; sequence QARFTWRGARL. Residues 227 to 244 traverse the membrane as a helical segment; it reads LRPLLQFTLIMMAFYTGL. The interval 245–256 is phosphatase sequence motif III; the sequence is SRVSDHKHHPSD. Over 245 to 258 the chain is Extracellular; sequence SRVSDHKHHPSDVL. His-252 (nucleophile) is an active-site residue. The helical transmembrane segment at 259 to 279 threads the bilayer; it reads AGFAQGALVACCIVFFVSDLF. The segment at 276-311 is mediates interaction with CTNND1; sequence SDLFKTKTTLSLPPSAIRKDMLSPVDIDRSNHHNMV. Residues 280-311 are Cytoplasmic-facing; sequence KTKTTLSLPPSAIRKDMLSPVDIDRSNHHNMV.

It belongs to the PA-phosphatase related phosphoesterase family. In terms of assembly, forms functional homodimers and homooligomers that are not required for substrate recognition and catalytic activity. Can also form heterooligomers with other PLPP2 and PLPP3. Interacts with CTNND1; negatively regulates the PLPP3-mediated stabilization of beta-catenin/CTNNB1. N-glycosylated. Contains high-mannose oligosaccharides.

The protein localises to the cell membrane. It is found in the basolateral cell membrane. It localises to the endoplasmic reticulum membrane. The protein resides in the endoplasmic reticulum-Golgi intermediate compartment membrane. Its subcellular location is the golgi apparatus membrane. The protein localises to the golgi apparatus. It is found in the trans-Golgi network membrane. It localises to the membrane raft. It carries out the reaction a 1,2-diacyl-sn-glycero-3-phosphate + H2O = a 1,2-diacyl-sn-glycerol + phosphate. The enzyme catalyses 1,2-dihexadecanoyl-sn-glycero-3-phosphate + H2O = 1,2-dihexadecanoyl-sn-glycerol + phosphate. It catalyses the reaction 1,2-di-(9Z-octadecenoyl)-sn-glycero-3-phosphate + H2O = 1,2-di-(9Z-octadecenoyl)-sn-glycerol + phosphate. The catalysed reaction is a monoacyl-sn-glycero-3-phosphate + H2O = a monoacylglycerol + phosphate. It carries out the reaction (9Z)-octadecenoyl-sn-glycero-3-phosphate + H2O = (9Z-octadecenoyl)-glycerol + phosphate. The enzyme catalyses sphing-4-enine 1-phosphate + H2O = sphing-4-enine + phosphate. It catalyses the reaction an N-acylsphing-4-enine 1-phosphate + H2O = an N-acylsphing-4-enine + phosphate. The catalysed reaction is N-(octanoyl)-sphing-4-enine-1-phosphate + H2O = N-octanoylsphing-4-enine + phosphate. It carries out the reaction N-(9Z-octadecenoyl)-ethanolamine phosphate + H2O = N-(9Z-octadecenoyl) ethanolamine + phosphate. The protein operates within lipid metabolism; phospholipid metabolism. Its activity is regulated as follows. Magnesium-independent phospholipid phosphatase. Insensitive to N-ethylmaleimide. Inhibited by sphingosine, zinc ions and modestly by propanolol. Functionally, magnesium-independent phospholipid phosphatase of the plasma membrane that catalyzes the dephosphorylation of a variety of glycerolipid and sphingolipid phosphate esters including phosphatidate/PA, lysophosphatidate/LPA, diacylglycerol pyrophosphate/DGPP, sphingosine 1-phosphate/S1P and ceramide 1-phosphate/C1P. Also acts on N-oleoyl ethanolamine phosphate/N-(9Z-octadecenoyl)-ethanolamine phosphate, a potential physiological compound. Has both an extracellular and an intracellular phosphatase activity, allowing the hydrolysis and the cellular uptake of these bioactive lipid mediators from the milieu, regulating signal transduction in different cellular processes. Through the dephosphorylation of extracellular sphingosine-1-phosphate and the regulation of its extra- and intracellular availability, plays a role in vascular homeostasis, regulating endothelial cell migration, adhesion, survival, proliferation and the production of pro-inflammatory cytokines. By maintaining the appropriate levels of this lipid in the cerebellum, also ensure its proper development and function. Through its intracellular lipid phosphatase activity may act in early compartments of the secretory pathway, regulating the formation of Golgi to endoplasmic reticulum retrograde transport carriers. In terms of biological role, independently of this phosphatase activity may also function in the Wnt signaling pathway and the stabilization of beta-catenin/CTNNB1, thereby regulating cell proliferation, migration and differentiation in angiogenesis or yet in tumor growth. Also plays a role in integrin-mediated cell-cell adhesion in angiogenesis. The sequence is that of Phospholipid phosphatase 3 from Bos taurus (Bovine).